The chain runs to 238 residues: Proenkephalin-A (238 aa).

The N-terminal stretch at 1–25 (MAASALSTCLWMLVLGTCVSLVVGT) is a signal peptide. Disulfide bonds link Cys27-Cys50, Cys31-Cys54, and Cys34-Cys66. The tract at residues 76–103 (QSPLASQQDQERVDAMMADEEDATSPEH) is disordered. 3 propeptides span residues 124 to 167 (SSAS…AEAV), 177 to 195 (ADRG…GRVL), and 206 to 230 (VGRP…SELQ).

The protein belongs to the opioid neuropeptide precursor family. Expressed by the venom gland. Moderately expressed in the venom gland transcriptome.

Its subcellular location is the secreted. Functionally, met-enkephalins compete with and mimic the effects of opiate drugs. They play a role in a number of physiologic functions, including pain perception and responses to stress. Enkephalin peptides found in Meiacanthus fangblennies induce physiological effects via their interaction with delta-type opioid receptors (OPRD1) (tested on M.grammistes). Therefore, finding a proenkephalin sequence in M.atrodorsalis venom suggests that this protein act in the same manner. This is Proenkephalin-A from Meiacanthus atrodorsalis (Forktail blenny).